A 432-amino-acid chain; its full sequence is Adenylosuccinate synthetase (432 aa).

Residues 16–22 (GDEGKGK) and 44–46 (GHM) each bind GTP. Asp-17 functions as the Proton acceptor in the catalytic mechanism. Asp-17 and Gly-44 together coordinate Mg(2+). IMP-binding positions include 17–20 (DEGK), 42–45 (NAGH), Thr-132, Arg-146, Gln-226, Thr-241, and Arg-305. His-45 serves as the catalytic Proton donor. Residue 301 to 307 (LNTGRPR) coordinates substrate. Residues Arg-307, 333-335 (LFD), and 415-417 (SVG) contribute to the GTP site.

It belongs to the adenylosuccinate synthetase family. As to quaternary structure, homodimer. The cofactor is Mg(2+).

The protein resides in the cytoplasm. The catalysed reaction is IMP + L-aspartate + GTP = N(6)-(1,2-dicarboxyethyl)-AMP + GDP + phosphate + 2 H(+). Its pathway is purine metabolism; AMP biosynthesis via de novo pathway; AMP from IMP: step 1/2. Plays an important role in the de novo pathway of purine nucleotide biosynthesis. Catalyzes the first committed step in the biosynthesis of AMP from IMP. The chain is Adenylosuccinate synthetase from Mycoplasma mycoides subsp. mycoides SC (strain CCUG 32753 / NCTC 10114 / PG1).